The chain runs to 551 residues: ATP synthase subunit alpha, mitochondrial (551 aa).

210–217 (GDRQTGKT) serves as a coordination point for ATP.

It belongs to the ATPase alpha/beta chains family. As to quaternary structure, F-type ATPases have 2 components, CF(1) - the catalytic core - and CF(0) - the membrane proton channel. CF(1) has five subunits: alpha(3), beta(3), gamma(1), delta(1), epsilon(1). CF(0) has three main subunits: a, b and c.

It is found in the mitochondrion. The protein localises to the mitochondrion inner membrane. Mitochondrial membrane ATP synthase (F(1)F(0) ATP synthase or Complex V) produces ATP from ADP in the presence of a proton gradient across the membrane which is generated by electron transport complexes of the respiratory chain. F-type ATPases consist of two structural domains, F(1) - containing the extramembraneous catalytic core, and F(0) - containing the membrane proton channel, linked together by a central stalk and a peripheral stalk. During catalysis, ATP synthesis in the catalytic domain of F(1) is coupled via a rotary mechanism of the central stalk subunits to proton translocation. Subunits alpha and beta form the catalytic core in F(1). Rotation of the central stalk against the surrounding alpha(3)beta(3) subunits leads to hydrolysis of ATP in three separate catalytic sites on the beta subunits. Subunit alpha does not bear the catalytic high-affinity ATP-binding sites. The protein is ATP synthase subunit alpha, mitochondrial (atp-1) of Neurospora crassa (strain ATCC 24698 / 74-OR23-1A / CBS 708.71 / DSM 1257 / FGSC 987).